A 425-amino-acid chain; its full sequence is Phosphomethylpyrimidine synthase (425 aa).

Residues Met-94, Tyr-123, His-162, 184 to 186, 225 to 228, and Glu-264 contribute to the substrate site; these read SRG and NGMR. His-268 serves as a coordination point for Zn(2+). Tyr-291 is a binding site for substrate. A Zn(2+)-binding site is contributed by His-332. [4Fe-4S] cluster contacts are provided by Cys-407, Cys-410, and Cys-414.

This sequence belongs to the ThiC family. [4Fe-4S] cluster is required as a cofactor.

The catalysed reaction is 5-amino-1-(5-phospho-beta-D-ribosyl)imidazole + S-adenosyl-L-methionine = 4-amino-2-methyl-5-(phosphooxymethyl)pyrimidine + CO + 5'-deoxyadenosine + formate + L-methionine + 3 H(+). The protein operates within cofactor biosynthesis; thiamine diphosphate biosynthesis. Catalyzes the synthesis of the hydroxymethylpyrimidine phosphate (HMP-P) moiety of thiamine from aminoimidazole ribotide (AIR) in a radical S-adenosyl-L-methionine (SAM)-dependent reaction. The sequence is that of Phosphomethylpyrimidine synthase from Methanocorpusculum labreanum (strain ATCC 43576 / DSM 4855 / Z).